We begin with the raw amino-acid sequence, 293 residues long: Movement protein BC1 (293 aa).

It belongs to the begomovirus movement protein BC1 family. As to quaternary structure, binds to dimeric supercoiled plasmid DNA. Post-translationally, phosphorylated.

Its subcellular location is the host cell membrane. The protein localises to the host microsome membrane. It is found in the host endoplasmic reticulum membrane. In terms of biological role, transports viral genome to neighboring plant cells directly through plasmosdesmata, without any budding. The movement protein allows efficient cell to cell propagation, by bypassing the host cell wall barrier. Begomovirus genome is shuttled out of nucleus by Nuclear shuttle protein (NSP) and the movement protein transports the DNA-NSP complex to cell plasmodesmata and facilitates further movement across the cell wall. This chain is Movement protein BC1, found in Macroptilium lathyroides (Lima bean).